Here is a 256-residue protein sequence, read N- to C-terminus: MLNIGQFSFHSRLLLGTGKFPDFDVQQKAIDVSEAEILTFAVRRMDIFDAKQPNLLEKLDVKKYTLLPNTAGAKNAEEAVRIAKLAKASGLCDMIKVEVIGDDRTLLPDPVETLKASEMLLEEGFIVLPYTSDDVVLARKLQELGVHAIMPGASPIGSGLGIVNPLNLSFIIEQATVPVIVDAGIGSPADAAFAMELGADGVLLNTAVSGANDPIKMAYAMKLGIEAGRLGFEAGRIARKRCATASSPLEGMSVVE.

Lys-96 acts as the Schiff-base intermediate with DXP in catalysis. 1-deoxy-D-xylulose 5-phosphate-binding positions include Gly-157, 183-184, and 205-206; these read AG and NT.

It belongs to the ThiG family. As to quaternary structure, homotetramer. Forms heterodimers with either ThiH or ThiS.

The protein localises to the cytoplasm. It catalyses the reaction [ThiS sulfur-carrier protein]-C-terminal-Gly-aminoethanethioate + 2-iminoacetate + 1-deoxy-D-xylulose 5-phosphate = [ThiS sulfur-carrier protein]-C-terminal Gly-Gly + 2-[(2R,5Z)-2-carboxy-4-methylthiazol-5(2H)-ylidene]ethyl phosphate + 2 H2O + H(+). The protein operates within cofactor biosynthesis; thiamine diphosphate biosynthesis. Its function is as follows. Catalyzes the rearrangement of 1-deoxy-D-xylulose 5-phosphate (DXP) to produce the thiazole phosphate moiety of thiamine. Sulfur is provided by the thiocarboxylate moiety of the carrier protein ThiS. In vitro, sulfur can be provided by H(2)S. This is Thiazole synthase from Bacillus mycoides (strain KBAB4) (Bacillus weihenstephanensis).